The chain runs to 432 residues: Enolase (432 aa).

Gln-163 contributes to the (2R)-2-phosphoglycerate binding site. Catalysis depends on Glu-205, which acts as the Proton donor. Asp-242, Glu-285, and Asp-312 together coordinate Mg(2+). Positions 337, 366, 367, and 388 each coordinate (2R)-2-phosphoglycerate. Lys-337 serves as the catalytic Proton acceptor.

Belongs to the enolase family. Mg(2+) serves as cofactor.

It is found in the cytoplasm. It localises to the secreted. Its subcellular location is the cell surface. It carries out the reaction (2R)-2-phosphoglycerate = phosphoenolpyruvate + H2O. The protein operates within carbohydrate degradation; glycolysis; pyruvate from D-glyceraldehyde 3-phosphate: step 4/5. Catalyzes the reversible conversion of 2-phosphoglycerate (2-PG) into phosphoenolpyruvate (PEP). It is essential for the degradation of carbohydrates via glycolysis. The sequence is that of Enolase from Desulfovibrio desulfuricans (strain ATCC 27774 / DSM 6949 / MB).